The sequence spans 893 residues: Protein bride of sevenless (893 aa).

A signal peptide spans 1–30 (MSGLQLIWKSPTQLVLFVLLITISCIDLCH). The Extracellular segment spans residues 32–530 (VGAATPTKKS…RIKLDTWVAT (499 aa)). 2 disordered regions span residues 36–66 (TPTKKSPPVRITKPQPVSSTTTAIPTTNEGS) and 82–102 (GTASSASSSSNGGSDDSSSTT). Over residues 50–66 (QPVSSTTTAIPTTNEGS) the composition is skewed to polar residues. Asparagine 183, asparagine 307, asparagine 328, asparagine 471, and asparagine 482 each carry an N-linked (GlcNAc...) asparagine glycan. The next 8 membrane-spanning stretches (helical) occupy residues 531–551 (GLTAAILGLIATLAILVFIVV), 563–583 (PVTSILLLLSLILVFCSFVPF), 607–627 (LCGVRVFIMTLVYCFVFSLLL), 630–650 (AVMLASIGSEGGFLSHVNGYI), 653–673 (IICVLSVFVQVGMSVQLLVVM), 692–712 (WGLLAYDFLLLCSLVSLVPFI), 722–742 (GILIVIGAVLILIIWSVWIAL), and 752–772 (AAIPLGMQASGWAVLVGILIP). Residues 773-893 (RTFLIVRGIE…SPDHSKITRF (121 aa)) lie on the Cytoplasmic side of the membrane. A disordered region spans residues 858–893 (ANINPQRPPPHPQQSPSRSSVCSLPPSPDHSKITRF).

This sequence belongs to the G-protein coupled receptor 3 family.

It localises to the cell membrane. Functionally, acts as a ligand for sevenless tyrosine-kinase receptor during eye development. This Drosophila virilis (Fruit fly) protein is Protein bride of sevenless (boss).